A 151-amino-acid chain; its full sequence is Small ribosomal subunit protein uS15 (151 aa).

This sequence belongs to the universal ribosomal protein uS15 family.

In Zea mays (Maize), this protein is Small ribosomal subunit protein uS15 (RPS13).